The chain runs to 201 residues: FMN-dependent NADH:quinone oxidoreductase (201 aa).

FMN-binding positions include serine 10, 16–18, 96–99, and 140–143; these read SQS, MYNF, and SRGG.

It belongs to the azoreductase type 1 family. In terms of assembly, homodimer. FMN serves as cofactor.

The catalysed reaction is 2 a quinone + NADH + H(+) = 2 a 1,4-benzosemiquinone + NAD(+). It catalyses the reaction N,N-dimethyl-1,4-phenylenediamine + anthranilate + 2 NAD(+) = 2-(4-dimethylaminophenyl)diazenylbenzoate + 2 NADH + 2 H(+). Functionally, quinone reductase that provides resistance to thiol-specific stress caused by electrophilic quinones. Its function is as follows. Also exhibits azoreductase activity. Catalyzes the reductive cleavage of the azo bond in aromatic azo compounds to the corresponding amines. This Pectobacterium atrosepticum (strain SCRI 1043 / ATCC BAA-672) (Erwinia carotovora subsp. atroseptica) protein is FMN-dependent NADH:quinone oxidoreductase.